The following is a 313-amino-acid chain: Small ribosomal subunit biogenesis GTPase RsgA (313 aa).

The CP-type G domain occupies 82–235 (REKLIAANAT…IIDSPGIQQF (154 aa)). GTP contacts are provided by residues 127–130 (NKTD) and 177–185 (GQSGMGKST). Zn(2+)-binding residues include Cys259, Cys264, His266, and Cys272.

The protein belongs to the TRAFAC class YlqF/YawG GTPase family. RsgA subfamily. In terms of assembly, monomer. Associates with 30S ribosomal subunit, binds 16S rRNA. It depends on Zn(2+) as a cofactor.

It is found in the cytoplasm. One of several proteins that assist in the late maturation steps of the functional core of the 30S ribosomal subunit. Helps release RbfA from mature subunits. May play a role in the assembly of ribosomal proteins into the subunit. Circularly permuted GTPase that catalyzes slow GTP hydrolysis, GTPase activity is stimulated by the 30S ribosomal subunit. In Nitrosospira multiformis (strain ATCC 25196 / NCIMB 11849 / C 71), this protein is Small ribosomal subunit biogenesis GTPase RsgA.